Reading from the N-terminus, the 215-residue chain is Cytochrome c biogenesis ATP-binding export protein CcmA (215 aa).

An ABC transporter domain is found at 3–215 (LEAENLAGER…MAAFSVEDIA (213 aa)). Residue 35–42 (GPNGSGKS) coordinates ATP.

Belongs to the ABC transporter superfamily. CcmA exporter (TC 3.A.1.107) family. The complex is composed of two ATP-binding proteins (CcmA) and two transmembrane proteins (CcmB).

It localises to the cell inner membrane. The enzyme catalyses heme b(in) + ATP + H2O = heme b(out) + ADP + phosphate + H(+). Its function is as follows. Part of the ABC transporter complex CcmAB involved in the biogenesis of c-type cytochromes; once thought to export heme, this seems not to be the case, but its exact role is uncertain. Responsible for energy coupling to the transport system. The chain is Cytochrome c biogenesis ATP-binding export protein CcmA from Brucella melitensis biotype 1 (strain ATCC 23456 / CCUG 17765 / NCTC 10094 / 16M).